We begin with the raw amino-acid sequence, 190 residues long: Dynein axonemal light chain 1 (190 aa).

Alanine 2 bears the N-acetylalanine mark. 4 LRR repeats span residues 49 to 70 (NCEKLSLSTNCIEKIANLNGLK), 71 to 92 (NLRILSLGRNNIKNLNGLEAVG), 94 to 115 (TLEELWISYNFIEKLKGIHVMK), and 116 to 137 (KLKILYMSNNLVKDWAEFVKLA). Position 56 is a phosphoserine (serine 56). An LRRCT domain is found at 150–190 (NPLEEKHSAEGNWVEEATKRVPKLKKLDGTPVIKEDEEEDN).

It belongs to the dynein light chain LC1-type family. Interacts with ZMYND10 (via C-terminus). Interacts with DNAH5, a outer arm dynein heavy chain. Interacts with tubulin located within the A-tubule of the outer doublets in a ATP-independent manner.

It localises to the cytoplasm. Its subcellular location is the cytoskeleton. It is found in the cilium axoneme. Its function is as follows. Part of the multisubunit axonemal ATPase complexes that generate the force for cilia motility and govern beat frequency. Component of the outer arm dynein (ODA). May be involved in a mechanosensory feedback mechanism controlling ODA activity based on external conformational cues by tethering the outer arm dynein heavy chain (DNAH5) to the microtubule within the axoneme. Important for ciliary function in the airways and for the function of the cilia that produce the nodal flow essential for the determination of the left-right asymmetry. The sequence is that of Dynein axonemal light chain 1 (DNAL1) from Bos taurus (Bovine).